The following is a 247-amino-acid chain: Phosphatidylserine decarboxylase proenzyme (247 aa).

Ser206 acts as the Schiff-base intermediate with substrate; via pyruvic acid in catalysis. A Pyruvic acid (Ser); by autocatalysis modification is found at Ser206.

It belongs to the phosphatidylserine decarboxylase family. PSD-A subfamily. As to quaternary structure, heterodimer of a large membrane-associated beta subunit and a small pyruvoyl-containing alpha subunit. Requires pyruvate as cofactor. In terms of processing, is synthesized initially as an inactive proenzyme. Formation of the active enzyme involves a self-maturation process in which the active site pyruvoyl group is generated from an internal serine residue via an autocatalytic post-translational modification. Two non-identical subunits are generated from the proenzyme in this reaction, and the pyruvate is formed at the N-terminus of the alpha chain, which is derived from the carboxyl end of the proenzyme. The post-translation cleavage follows an unusual pathway, termed non-hydrolytic serinolysis, in which the side chain hydroxyl group of the serine supplies its oxygen atom to form the C-terminus of the beta chain, while the remainder of the serine residue undergoes an oxidative deamination to produce ammonia and the pyruvoyl prosthetic group on the alpha chain.

It is found in the cell membrane. It carries out the reaction a 1,2-diacyl-sn-glycero-3-phospho-L-serine + H(+) = a 1,2-diacyl-sn-glycero-3-phosphoethanolamine + CO2. It functions in the pathway phospholipid metabolism; phosphatidylethanolamine biosynthesis; phosphatidylethanolamine from CDP-diacylglycerol: step 2/2. Its function is as follows. Catalyzes the formation of phosphatidylethanolamine (PtdEtn) from phosphatidylserine (PtdSer). This chain is Phosphatidylserine decarboxylase proenzyme, found in Nitrobacter winogradskyi (strain ATCC 25391 / DSM 10237 / CIP 104748 / NCIMB 11846 / Nb-255).